Here is a 335-residue protein sequence, read N- to C-terminus: Beta-ketoacyl-[acyl-carrier-protein] synthase III (335 aa).

Active-site residues include C117 and H258. Residues 259-263 are ACP-binding; it reads QANQR. N288 is a catalytic residue.

Belongs to the thiolase-like superfamily. FabH family. As to quaternary structure, homodimer.

The protein resides in the cytoplasm. The catalysed reaction is malonyl-[ACP] + acetyl-CoA + H(+) = 3-oxobutanoyl-[ACP] + CO2 + CoA. It functions in the pathway lipid metabolism; fatty acid biosynthesis. Functionally, catalyzes the condensation reaction of fatty acid synthesis by the addition to an acyl acceptor of two carbons from malonyl-ACP. Catalyzes the first condensation reaction which initiates fatty acid synthesis and may therefore play a role in governing the total rate of fatty acid production. Possesses both acetoacetyl-ACP synthase and acetyl transacylase activities. Its substrate specificity determines the biosynthesis of branched-chain and/or straight-chain of fatty acids. The polypeptide is Beta-ketoacyl-[acyl-carrier-protein] synthase III (Synechococcus elongatus (strain ATCC 33912 / PCC 7942 / FACHB-805) (Anacystis nidulans R2)).